A 253-amino-acid chain; its full sequence is uncharacterized protein (253 aa).

A BON 1 domain is found at 4-73; sequence FGKSTADRVK…IDVSGVTVLQ (70 aa). Residues 79 to 93 show a composition bias toward low complexity; it reads AAQTAPTTPAQTSPS. The segment at 79–105 is disordered; the sequence is AAQTAPTTPAQTSPSVQDSPSTPVQMP. Positions 119-188 constitute a BON 2 domain; that stretch reads DTSRIAKAVL…VDISGLRVAQ (70 aa). The 48-residue stretch at 204–251 folds into the LysM domain; sequence TVYTVKPGDSLSKIAEHYYGDQMEYKKIAHYNNISNPDLIQPGQKLRI.

This is an uncharacterized protein from Deinococcus radiodurans (strain ATCC 13939 / DSM 20539 / JCM 16871 / CCUG 27074 / LMG 4051 / NBRC 15346 / NCIMB 9279 / VKM B-1422 / R1).